Here is a 421-residue protein sequence, read N- to C-terminus: Serine hydroxymethyltransferase (421 aa).

(6S)-5,6,7,8-tetrahydrofolate contacts are provided by residues L121 and 125–127 (GHL). The residue at position 229 (K229) is an N6-(pyridoxal phosphate)lysine.

Belongs to the SHMT family. As to quaternary structure, homodimer. Requires pyridoxal 5'-phosphate as cofactor.

It is found in the cytoplasm. It catalyses the reaction (6R)-5,10-methylene-5,6,7,8-tetrahydrofolate + glycine + H2O = (6S)-5,6,7,8-tetrahydrofolate + L-serine. It participates in one-carbon metabolism; tetrahydrofolate interconversion. Its pathway is amino-acid biosynthesis; glycine biosynthesis; glycine from L-serine: step 1/1. Its function is as follows. Catalyzes the reversible interconversion of serine and glycine with tetrahydrofolate (THF) serving as the one-carbon carrier. This reaction serves as the major source of one-carbon groups required for the biosynthesis of purines, thymidylate, methionine, and other important biomolecules. Also exhibits THF-independent aldolase activity toward beta-hydroxyamino acids, producing glycine and aldehydes, via a retro-aldol mechanism. This is Serine hydroxymethyltransferase from Haemophilus influenzae (strain PittEE).